The chain runs to 308 residues: uncharacterized protein (308 aa).

A disordered region spans residues 19 to 43; that stretch reads EPQASGAGPAQTPPPVTVPMTPPSK. Pro residues predominate over residues 29–43; sequence QTPPPVTVPMTPPSK.

This is an uncharacterized protein from Deinococcus radiodurans (strain ATCC 13939 / DSM 20539 / JCM 16871 / CCUG 27074 / LMG 4051 / NBRC 15346 / NCIMB 9279 / VKM B-1422 / R1).